The sequence spans 84 residues: RNA-binding protein Hfq (84 aa).

The region spanning Asp11–Ile71 is the Sm domain.

Belongs to the Hfq family. In terms of assembly, homohexamer.

Its function is as follows. RNA chaperone that binds small regulatory RNA (sRNAs) and mRNAs to facilitate mRNA translational regulation in response to envelope stress, environmental stress and changes in metabolite concentrations. Also binds with high specificity to tRNAs. In Paramagnetospirillum magneticum (strain ATCC 700264 / AMB-1) (Magnetospirillum magneticum), this protein is RNA-binding protein Hfq.